Reading from the N-terminus, the 354-residue chain is Serum paraoxonase/lactonase 3 (354 aa).

N29 carries N-linked (GlcNAc...) asparagine glycosylation. C42 and C352 form a disulfide bridge. Residues E53 and D54 each coordinate Ca(2+). H114 acts as the Proton acceptor in catalysis. I116 is a Ca(2+) binding site. Position 165 is a phosphoserine (S165). Ca(2+)-binding residues include N167, D168, N223, D268, and N269. N-linked (GlcNAc...) asparagine glycans are attached at residues N269 and N323.

It belongs to the paraoxonase family. As to quaternary structure, homodimer. The cofactor is Ca(2+). Post-translationally, the signal sequence is not cleaved.

It is found in the secreted. The protein resides in the extracellular space. It catalyses the reaction a phenyl acetate + H2O = a phenol + acetate + H(+). The catalysed reaction is An aryl dialkyl phosphate + H2O = dialkyl phosphate + an aryl alcohol.. The enzyme catalyses an N-acyl-L-homoserine lactone + H2O = an N-acyl-L-homoserine + H(+). Functionally, has low activity towards the organophosphate paraxon and aromatic carboxylic acid esters. Rapidly hydrolyzes lactones such as statin prodrugs (e.g. lovastatin). Hydrolyzes aromatic lactones and 5- or 6-member ring lactones with aliphatic substituents but not simple lactones or those with polar substituents. In Homo sapiens (Human), this protein is Serum paraoxonase/lactonase 3 (PON3).